A 341-amino-acid chain; its full sequence is tRNA N6-adenosine threonylcarbamoyltransferase (341 aa).

Histidine 115 and histidine 119 together coordinate Fe cation. Residues 137–141, aspartate 170, glycine 183, aspartate 187, and asparagine 276 contribute to the substrate site; that span reads IVSGG. Aspartate 304 serves as a coordination point for Fe cation.

Belongs to the KAE1 / TsaD family. It depends on Fe(2+) as a cofactor.

It is found in the cytoplasm. It carries out the reaction L-threonylcarbamoyladenylate + adenosine(37) in tRNA = N(6)-L-threonylcarbamoyladenosine(37) in tRNA + AMP + H(+). Required for the formation of a threonylcarbamoyl group on adenosine at position 37 (t(6)A37) in tRNAs that read codons beginning with adenine. Is involved in the transfer of the threonylcarbamoyl moiety of threonylcarbamoyl-AMP (TC-AMP) to the N6 group of A37, together with TsaE and TsaB. TsaD likely plays a direct catalytic role in this reaction. This Staphylococcus aureus (strain bovine RF122 / ET3-1) protein is tRNA N6-adenosine threonylcarbamoyltransferase.